The chain runs to 953 residues: Protein ENHANCER OF LHP1 1 (953 aa).

WD repeat units lie at residues 15–55 (GGSA…TLPP), 60–99 (HHQD…FQTN), 102–143 (RFTL…RVLK), 144–183 (GHKG…VSFT), 192–232 (GFNT…KLFA), 236–275 (DHLE…DIDR), and 277–316 (KFEE…SMLS). Disordered stretches follow at residues 347–370 (SESL…RKRL), 385–419 (EELN…GAFK), and 851–877 (ESKV…SATK). Residues 349–359 (SLDDAMGDSDD) are compositionally biased toward acidic residues. Residues 853–877 (KVQNPPASIQTSENTEAVMKSSATK) show a composition bias toward polar residues. Residues 900-907 (TKKDKSDD) carry the Nuclear localization signal motif. A disordered region spans residues 919 to 953 (KNPVNNVNKEDKGQEKEVNQGEARRSSNPFLKSTV). A compositionally biased stretch (basic and acidic residues) spans 926 to 943 (NKEDKGQEKEVNQGEARR). The span at 944 to 953 (SSNPFLKSTV) shows a compositional bias: polar residues.

As to quaternary structure, interacts with EZA1/SWN, LHP1, SLD5 and CLF in the nucleus. As to expression, expressed in root meristematic zones, initiating lateral roots, young leaves and the shoot apex.

The protein localises to the nucleus. Its function is as follows. Participates in maintaining the H3K27me3 mark at target genes by interacting with LHP1-PRC2 complexes during replication, thus contributing to H3K27me3 inheritance. The protein is Protein ENHANCER OF LHP1 1 of Arabidopsis thaliana (Mouse-ear cress).